Consider the following 71-residue polypeptide: Vitellogenin-A1 (71 aa).

An N-terminal signal peptide occupies residues 1 to 15; sequence MRGIILALLLAIAGS. One can recognise a Vitellogenin domain in the interval 24–71; it reads FSESKTSVYNYEAVILNGFPESGLSRAGIKINCKVEISAYAQRSYFLK.

As to expression, produced by the liver, secreted into the blood and then sequestered by receptor mediated endocytosis into growing oocytes, where it is generally cleaved, giving rise to the respective yolk components.

Its function is as follows. Precursor of the major egg-yolk proteins that are sources of nutrients during early development of oviparous organisms. In Xenopus laevis (African clawed frog), this protein is Vitellogenin-A1.